A 104-amino-acid polypeptide reads, in one-letter code: UPF0213 protein YsiG (104 aa).

One can recognise a GIY-YIG domain in the interval asparagine 2–leucine 79.

This sequence belongs to the UPF0213 family.

This chain is UPF0213 protein YsiG (ysiG), found in Lactococcus lactis subsp. lactis (strain IL1403) (Streptococcus lactis).